We begin with the raw amino-acid sequence, 119 residues long: MKIMHTSELLKHIYDINLSYLLLAQRLILQDKASAMFRLGIDEEMATTLEALTLPQMVKLAETNQLVCHFRFDNHQTITRLTQDSRVDDLQQIHTGIMLSTRLLNEANQQDASERKRRG.

This sequence belongs to the FlhD family. Homodimer; disulfide-linked. Forms a heterohexamer composed of two FlhC and four FlhD subunits. Each FlhC binds a FlhD dimer, forming a heterotrimer, and a hexamer assembles by dimerization of two heterotrimers.

It localises to the cytoplasm. Functionally, functions in complex with FlhC as a master transcriptional regulator that regulates transcription of several flagellar and non-flagellar operons by binding to their promoter region. Activates expression of class 2 flagellar genes, including fliA, which is a flagellum-specific sigma factor that turns on the class 3 genes. Also regulates genes whose products function in a variety of physiological pathways. The polypeptide is Flagellar transcriptional regulator FlhD (Escherichia fergusonii (strain ATCC 35469 / DSM 13698 / CCUG 18766 / IAM 14443 / JCM 21226 / LMG 7866 / NBRC 102419 / NCTC 12128 / CDC 0568-73)).